The following is a 312-amino-acid chain: Retron Ec83 reverse transcriptase (312 aa).

Residues proline 14–leucine 239 enclose the Reverse transcriptase domain. 3 residues coordinate Mg(2+): aspartate 97, aspartate 185, and aspartate 186.

This sequence belongs to the bacterial reverse transcriptase family.

The enzyme catalyses DNA(n) + a 2'-deoxyribonucleoside 5'-triphosphate = DNA(n+1) + diphosphate. Reverse transcriptase (RT) component of antiviral defense system retron Ec83, composed of a non-coding RNA (ncRNA), this reverse transcriptase (RT), a probable ATPase and a putative HNH endonuclease. Expression of retron Ec83 confers protection against bacteriophages T2, T4 and T6. At multiplicity of infection (MOI) of 0.02 cultures slow growth when infected with T4 but do not collapse, at MOI 2 cultures enter growth stasis. Responsible for synthesis of msDNA-Ec83 (a linear ssDNA with a 5'-terminal phosphate residue). Unlike most known msDNAs the mature product from the original strain does not have an RNA component. When the ncRNA plus RT are expressed in strain K12 / JM109 only linear DNA is seen in stationary phase cells, but logarithmic phase cells have both a linear and branched msDNA (a branched molecule with RNA linked by a 2',5'-phosphodiester bond to ssDNA, a 'classic' retron). The branched msDNA is probably the precursor for the mature linear msDNA, the precursor is cleaved endonucleolytically by ExoVII (xseA-xseB) leaving the observed mature 5'-phosphate ssDNA terminus. The retron transcript serves as primer (from a conserved internal G residue) and template for the reaction, and codes for the RT. Overexpression of the ncRNA and RT, which leads to increased levels of msDNA, is mutagenic in vivo. This may be due to a mismatch in the msDNA stem which binds and sequesters MutS and/or MutL. This chain is Retron Ec83 reverse transcriptase, found in Escherichia coli.